A 460-amino-acid polypeptide reads, in one-letter code: Probable asparagine--tRNA ligase, mitochondrial (460 aa).

It belongs to the class-II aminoacyl-tRNA synthetase family.

It is found in the mitochondrion matrix. The catalysed reaction is tRNA(Asn) + L-asparagine + ATP = L-asparaginyl-tRNA(Asn) + AMP + diphosphate + H(+). In Dictyostelium discoideum (Social amoeba), this protein is Probable asparagine--tRNA ligase, mitochondrial (asnS2).